The chain runs to 86 residues: MKNLIAELLLKLAQKEEESKELCAQVEALEIIVTAMLRNMAQNDQQRLIEQVEGALYEVKPDASIPDDDTELLRNYVKKLLKHPRQ.

Positions 1-36 form a coiled coil; that stretch reads MKNLIAELLLKLAQKEEESKELCAQVEALEIIVTAM.

The protein belongs to the IraP family. In terms of assembly, interacts with RssB.

Its subcellular location is the cytoplasm. Functionally, inhibits RpoS proteolysis by regulating RssB activity, thereby increasing the stability of the sigma stress factor RpoS especially during phosphate starvation, but also in stationary phase and during nitrogen starvation. Its effect on RpoS stability is due to its interaction with RssB, which probably blocks the interaction of RssB with RpoS, and the consequent delivery of the RssB-RpoS complex to the ClpXP protein degradation pathway. In Shigella boydii serotype 4 (strain Sb227), this protein is Anti-adapter protein IraP.